The chain runs to 84 residues: MNLFDFFRANKKPSTASVAKERLQIIVAHERGQRSTPDYLPSLQKELVEVIRKYVNIGNDDVHVALESQGSCSILELNITLPDR.

It belongs to the MinE family.

Its function is as follows. Prevents the cell division inhibition by proteins MinC and MinD at internal division sites while permitting inhibition at polar sites. This ensures cell division at the proper site by restricting the formation of a division septum at the midpoint of the long axis of the cell. The protein is Cell division topological specificity factor of Pseudomonas fluorescens (strain Pf0-1).